The sequence spans 383 residues: Probable cytosolic iron-sulfur protein assembly protein 1 (383 aa).

WD repeat units follow at residues 10–49 (AHNDKVWSVSVHPTLPIIATASTDKSTKLYKLSARQKFPL), 56–108 (THKR…VEYD), 135–175 (GHEN…EEFE), 182–221 (DHSQDVKNVSWHPSMNILASSSYDDTIRIYQQDIAGDEWS), 228–275 (GHEG…EDDE), 302–341 (VHKYPVYSVAWSALTGKIASAGSDGKIVVYSETEKGKWVI), and 349–383 (HGVHEINCVIWAQLDDENEILVSAGDDGYVNLWKI).

It belongs to the WD repeat CIA1 family. As to quaternary structure, interacts with NAR1.

It localises to the cytoplasm. The protein resides in the nucleus. Functionally, essential component of the cytosolic iron-sulfur (Fe/S) protein assembly machinery. Required for the maturation of extramitochondrial Fe/S proteins. The sequence is that of Probable cytosolic iron-sulfur protein assembly protein 1 from Candida albicans (strain SC5314 / ATCC MYA-2876) (Yeast).